A 250-amino-acid chain; its full sequence is 6-phosphogluconate dehydrogenase, decarboxylating (250 aa).

Substrate contacts are provided by K29 and R56. Position 77 is an N6-acetyllysine (K77). Substrate contacts are provided by R214 and H220. Residue 245–248 participates in NADP(+) binding; the sequence is SSSY.

This sequence belongs to the 6-phosphogluconate dehydrogenase family. As to quaternary structure, homodimer.

It is found in the cytoplasm. It carries out the reaction 6-phospho-D-gluconate + NADP(+) = D-ribulose 5-phosphate + CO2 + NADPH. The protein operates within carbohydrate degradation; pentose phosphate pathway; D-ribulose 5-phosphate from D-glucose 6-phosphate (oxidative stage): step 3/3. Catalyzes the oxidative decarboxylation of 6-phosphogluconate to ribulose 5-phosphate and CO(2), with concomitant reduction of NADP to NADPH. This Sus scrofa (Pig) protein is 6-phosphogluconate dehydrogenase, decarboxylating (PGD).